The sequence spans 1634 residues: Phosphatidylinositol 4-phosphate 3-kinase C2 domain-containing subunit beta (1634 aa).

Positions 2–298 are interaction with GRB2; it reads SSTQGNGEHW…YASRYGNRKN (297 aa). 2 disordered regions span residues 45-188 and 259-315; these read EENR…QPSD and GRGP…VGSR. The span at 87-112 shows a compositional bias: polar residues; that stretch reads SDPTLNYNSLSPQEGPPNHSTSQGPQ. Residues 176-187 show a composition bias toward low complexity; the sequence is GSPSSSKISQPS. A compositionally biased stretch (basic and acidic residues) spans 259 to 270; it reads GRGPLDFSKDTS. The 89-residue stretch at 375–463 folds into the PI3K-RBD domain; that stretch reads EVNLKVTVLC…DIDIRLQLME (89 aa). One can recognise a C2 PI3K-type domain in the interval 635-786; the sequence is VYATHRIPII…DSVILQIDFP (152 aa). Residues 805–981 form the PIK helical domain; the sequence is RYEFGSLREE…QYLLAALLCC (177 aa). Positions 1050–1328 constitute a PI3K/PI4K catalytic domain; that stretch reads VPRDCSYFNS…LIESSLGSVA (279 aa). The G-loop stretch occupies residues 1056 to 1062; it reads YFNSNAV. A catalytic loop region spans residues 1192–1200; that stretch reads GICDRHNDN. The activation loop stretch occupies residues 1211–1237; the sequence is HIDFGRFLGHAQMFGNIKRDRAPFVFT. The PX domain occupies 1365–1481; that stretch reads GRISDVFLCR…TFFHPLPRDE (117 aa). The 121-residue stretch at 1504 to 1624 folds into the C2 domain; it reads VGGEVKLSIS…DLAQEKTGWF (121 aa).

The protein belongs to the PI3/PI4-kinase family. As to quaternary structure, part of a complex with ERBB2 and EGFR. Part of a complex with phosphorylated EGFR and GRB2. Interacts with phosphorylated EGFR and PDGFR, maybe indirectly. Interacts with GRB2. Ca(2+) serves as cofactor. Mg(2+) is required as a cofactor. It depends on Mn(2+) as a cofactor. In terms of tissue distribution, expressed in columnar and transitional epithelia, mononuclear cells, and ganglion cells (at protein level). Widely expressed, with highest levels in thymus and placenta and lowest in peripheral blood, skeletal muscle and kidney.

The protein localises to the microsome. It is found in the cell membrane. Its subcellular location is the cytoplasm. It localises to the cytosol. The protein resides in the nucleus. The protein localises to the endoplasmic reticulum. It carries out the reaction a 1,2-diacyl-sn-glycero-3-phospho-(1D-myo-inositol 4-phosphate) + ATP = a 1,2-diacyl-sn-glycero-3-phospho-(1D-myo-inositol-3,4-bisphosphate) + ADP + H(+). The catalysed reaction is a 1,2-diacyl-sn-glycero-3-phospho-(1D-myo-inositol) + ATP = a 1,2-diacyl-sn-glycero-3-phospho-(1D-myo-inositol-3-phosphate) + ADP + H(+). Activated by GRB2. Its function is as follows. Phosphorylates PtdIns and PtdIns4P with a preference for PtdIns. Does not phosphorylate PtdIns(4,5)P2. May be involved in EGF and PDGF signaling cascades. The polypeptide is Phosphatidylinositol 4-phosphate 3-kinase C2 domain-containing subunit beta (PIK3C2B) (Homo sapiens (Human)).